The primary structure comprises 509 residues: Protein disulfide-isomerase (509 aa).

Positions 1 to 19 (MLSRALLCLALAWAARVGA) are cleaved as a signal peptide. Positions 20 to 136 (DALEEEDNVL…IVNWLKKRTG (117 aa)) constitute a Thioredoxin 1 domain. Catalysis depends on nucleophile residues Cys-55 and Cys-58. Cysteines 55 and 58 form a disulfide. At Lys-202 the chain carries N6-acetyllysine. An N6-succinyllysine mark is found at Lys-224 and Lys-273. 2 positions are modified to phosphoserine: Ser-333 and Ser-359. The 143-residue stretch at 335 to 477 (ELTAEKITQF…FKKFLESGGQ (143 aa)) folds into the Thioredoxin 2 domain. Residues Cys-399 and Cys-402 each act as nucleophile in the active site. Cys-399 and Cys-402 are oxidised to a cystine. At Ser-429 the chain carries Phosphoserine. A Prevents secretion from ER motif is present at residues 506 to 509 (KDEL).

This sequence belongs to the protein disulfide isomerase family. Heterodimer; heterodimerizes with the protein microsomal triglyceride transfer MTTP. Homodimer. Monomers and homotetramers may also occur. Interacts with P4HA2, forming a heterotetramer consisting of 2 alpha subunits (P4HA2) and 2 beta (P4HB), where P4HB plays the role of a structural subunit; this tetramer catalyzes the formation of 4-hydroxyproline in collagen. Also constitutes the structural subunit of the microsomal triacylglycerol transfer protein MTTP in mammalian cells. Stabilizes both enzymes and retain them in the ER without contributing to the catalytic activity. Binds UBQLN1. Interacts with ERO1B. Interacts with ILDR2. Interacts with ERN1/IRE1A (via N-terminus); the interaction is enhanced by phosphorylation of P4HB by FAM20C in response to endoplasmic reticulum stress and results in attenuation of ERN1 activity. Post-translationally, phosphorylation of Ser-359 by FAM20C is induced by endoplasmic reticulum stress and results in a functional switch from oxidoreductase to molecular chaperone. It also promotes interaction with ERN1.

It localises to the endoplasmic reticulum. It is found in the endoplasmic reticulum lumen. The protein resides in the melanosome. The protein localises to the cell membrane. It catalyses the reaction Catalyzes the rearrangement of -S-S- bonds in proteins.. In terms of biological role, this multifunctional protein catalyzes the formation, breakage and rearrangement of disulfide bonds. At the cell surface, seems to act as a reductase that cleaves disulfide bonds of proteins attached to the cell. May therefore cause structural modifications of exofacial proteins. Inside the cell, seems to form/rearrange disulfide bonds of nascent proteins. At high concentrations and following phosphorylation by FAM20C, functions as a chaperone that inhibits aggregation of misfolded proteins. At low concentrations, facilitates aggregation (anti-chaperone activity). May be involved with other chaperones in the structural modification of the TG precursor in hormone biogenesis. Also acts as a structural subunit of various enzymes such as prolyl 4-hydroxylase and microsomal triacylglycerol transfer protein MTTP. Receptor for LGALS9; the interaction retains P4HB at the cell surface of Th2 T helper cells, increasing disulfide reductase activity at the plasma membrane, altering the plasma membrane redox state and enhancing cell migration. This is Protein disulfide-isomerase (P4hb) from Rattus norvegicus (Rat).